A 233-amino-acid chain; its full sequence is Coenzyme Q-binding protein COQ10 homolog, mitochondrial (233 aa).

The transit peptide at 1–34 (MAEKATSLFLRAMEISEKQSFDVMRRNSSCTIRH) directs the protein to the mitochondrion.

Belongs to the COQ10 family. Interacts with coenzyme Q.

Its subcellular location is the mitochondrion inner membrane. Functionally, required for the function of coenzyme Q in the respiratory chain. May serve as a chaperone or may be involved in the transport of Q6 from its site of synthesis to the catalytic sites of the respiratory complexes. This Danio rerio (Zebrafish) protein is Coenzyme Q-binding protein COQ10 homolog, mitochondrial.